Consider the following 352-residue polypeptide: Poly(A)+ RNA export protein (352 aa).

5 WD repeats span residues 28–58 (PPED…RIYE), 72–102 (EHQG…KVFD), 113–146 (AHDD…KYWD), 192–229 (IFKL…AIQN), and 252–282 (ADVY…SFWD).

The protein belongs to the WD repeat rae1 family. In terms of assembly, interacts with rpn15/dss1 and uap56.

Its subcellular location is the nucleus. Required for mitotic cell growth as well as for spore germination. Functions in cell cycle progression through trafficking of proteins required for mitosis. Has a role in the mRNA export process. This chain is Poly(A)+ RNA export protein (rae1), found in Schizosaccharomyces pombe (strain 972 / ATCC 24843) (Fission yeast).